The primary structure comprises 1037 residues: Huntingtin-interacting protein 1 (1037 aa).

In terms of domain architecture, ENTH spans 32 to 160 (ERESFERTQT…EYHTKNPRFP (129 aa)). Residue Ser338 is modified to Phosphoserine. Residues 368–644 (VNKDEKDHLI…IQDALNQLEE (277 aa)) are a coiled coil. Residues 410-491 (SELEADLAEQ…HADLLRKNAE (82 aa)) are pDED. An I/LWEQ domain is found at 771–1012 (GLDIKQEELG…ELRKKHYELA (242 aa)). Residues 867-924 (RWTEGLISASKAVGWGATVMVDAADLVVQGRGKFEELMVCSHEIAASTAQLVAASKVK) are important for actin binding. Residues 1017–1037 (GWEEGTEASPPTLQEVVTEKE) form a disordered region.

Belongs to the SLA2 family. In terms of assembly, homodimer. Binds actin. Binds HTT (via N-terminus). This interaction is restricted to the brain. Binds to IFT57. In normal conditions, it poorly interacts with IFT57, HIP1 being strongly associated with HTT. However, in mutant HTT proteins with a long poly-Gln region, interaction between HTT and HIP1 is inhibited, promoting the interaction between HIP1 and IFT57. Interacts with CLTB (via N-terminus). Interacts (via coiled coil domain) with AR. Interacts with AP2A1, AP2A2, CLTC and HIP1R. Interacts with GRIA1, GRIN2A and GRIN2B. In terms of tissue distribution, ubiquitously expressed with the highest level in brain. Expression is up-regulated in prostate and colon cancer.

Its subcellular location is the cytoplasm. It localises to the nucleus. It is found in the endomembrane system. The protein localises to the cytoplasmic vesicle. The protein resides in the clathrin-coated vesicle membrane. In terms of biological role, plays a role in clathrin-mediated endocytosis and trafficking. Involved in regulating AMPA receptor trafficking in the central nervous system in an NMDA-dependent manner. Regulates presynaptic nerve terminal activity. Enhances androgen receptor (AR)-mediated transcription. May act as a proapoptotic protein that induces cell death by acting through the intrinsic apoptosis pathway. Binds 3-phosphoinositides (via ENTH domain). May act through the ENTH domain to promote cell survival by stabilizing receptor tyrosine kinases following ligand-induced endocytosis. May play a functional role in the cell filament networks. May be required for differentiation, proliferation, and/or survival of somatic and germline progenitors. In Homo sapiens (Human), this protein is Huntingtin-interacting protein 1 (HIP1).